A 697-amino-acid chain; its full sequence is Potassium-transporting ATPase ATP-binding subunit (697 aa).

Transmembrane regions (helical) follow at residues 55 to 75 (PIMF…FLPS), 79 to 99 (SIPG…VLFA), 245 to 265 (LTLI…YLGF), and 271 to 291 (VLVA…LSAI). Catalysis depends on Asp324, which acts as the 4-aspartylphosphate intermediate. Residues Asp361, Glu365, 393 to 400 (FKAETRMS), and Lys412 contribute to the ATP site. Positions 535 and 539 each coordinate Mg(2+). Transmembrane regions (helical) follow at residues 605-625 (FAII…LNIM), 633-653 (AILS…PLAM), and 677-697 (GGVI…GLFI).

Belongs to the cation transport ATPase (P-type) (TC 3.A.3) family. Type IA subfamily. The system is composed of three essential subunits: KdpA, KdpB and KdpC.

The protein localises to the cell membrane. It catalyses the reaction K(+)(out) + ATP + H2O = K(+)(in) + ADP + phosphate + H(+). Part of the high-affinity ATP-driven potassium transport (or Kdp) system, which catalyzes the hydrolysis of ATP coupled with the electrogenic transport of potassium into the cytoplasm. This subunit is responsible for energy coupling to the transport system and for the release of the potassium ions to the cytoplasm. This Bacillus anthracis (strain CDC 684 / NRRL 3495) protein is Potassium-transporting ATPase ATP-binding subunit.